The following is a 371-amino-acid chain: Anhydro-N-acetylmuramic acid kinase (371 aa).

12-20 (GTVLDGNID) is an ATP binding site.

The protein belongs to the anhydro-N-acetylmuramic acid kinase family.

It carries out the reaction 1,6-anhydro-N-acetyl-beta-muramate + ATP + H2O = N-acetyl-D-muramate 6-phosphate + ADP + H(+). It functions in the pathway amino-sugar metabolism; 1,6-anhydro-N-acetylmuramate degradation. The protein operates within cell wall biogenesis; peptidoglycan recycling. Catalyzes the specific phosphorylation of 1,6-anhydro-N-acetylmuramic acid (anhMurNAc) with the simultaneous cleavage of the 1,6-anhydro ring, generating MurNAc-6-P. Is required for the utilization of anhMurNAc either imported from the medium or derived from its own cell wall murein, and thus plays a role in cell wall recycling. In Rhizobium rhizogenes (strain K84 / ATCC BAA-868) (Agrobacterium radiobacter), this protein is Anhydro-N-acetylmuramic acid kinase.